The sequence spans 772 residues: Mitochondrial intermediate peptidase (772 aa).

A mitochondrion-targeting transit peptide spans 1–33 (MLARPSTTVLARRPFFRFRGCLNEPRPTKARCL). His556 contributes to the Zn(2+) binding site. The active site involves Glu557. 2 residues coordinate Zn(2+): His560 and His563.

This sequence belongs to the peptidase M3 family. The cofactor is Zn(2+).

It is found in the mitochondrion matrix. It carries out the reaction Release of an N-terminal octapeptide as second stage of processing of some proteins imported into the mitochondrion.. In terms of biological role, cleaves proteins, imported into the mitochondrion, to their mature size. While most mitochondrial precursor proteins are processed to the mature form in one step by mitochondrial processing peptidase (MPP), the sequential cleavage by MIP of an octapeptide after initial processing by MPP is a required step for a subgroup of nuclear-encoded precursor proteins destined for the matrix or the inner membrane. The chain is Mitochondrial intermediate peptidase (OCT1) from Coprinopsis scobicola (Ink cap fungus).